A 154-amino-acid polypeptide reads, in one-letter code: UPF0178 protein Gbem_2221 (154 aa).

The protein belongs to the UPF0178 family.

This Citrifermentans bemidjiense (strain ATCC BAA-1014 / DSM 16622 / JCM 12645 / Bem) (Geobacter bemidjiensis) protein is UPF0178 protein Gbem_2221.